We begin with the raw amino-acid sequence, 560 residues long: Diphtheria toxin (560 aa).

Residues 1 to 25 (MSRKLFASILIGALLGIGAPPSAHA) form the signal peptide. NAD(+) contacts are provided by His-46 and Tyr-90. Residue Glu-173 is part of the active site. Cystine bridges form between Cys-211/Cys-226 and Cys-486/Cys-496.

Homodimer.

It carries out the reaction diphthamide-[translation elongation factor 2] + NAD(+) = N-(ADP-D-ribosyl)diphthamide-[translation elongation factor 2] + nicotinamide + H(+). Its function is as follows. Diphtheria toxin, produced by a phage infecting Corynebacterium diphtheriae, is a proenzyme that, after activation, catalyzes the covalent attachment of the ADP ribose moiety of NAD to elongation factor 2. Fragment A is responsible for enzymatic ADP-ribosylation of elongation factor 2, while fragment B is responsible for binding of toxin to cell receptors and entry of fragment A. The chain is Diphtheria toxin from Corynephage omega.